The chain runs to 643 residues: MPDRLVSATLALRDDGTLVSPEFGELHRGASGTLARAHRTFVAGNGLPARWQRRRTFTIVTTAFGAGAGFLAAWAAWRDDPARCERLHVVAVEPHPFSRDDLHRAVSHMVADTTISADVDALLDAWPMRVPGLHRLEFDAGRVVLTLAFGDTIDLLKKLVARADAFFLDGAAASSDGIRALAKLAGEHATFATHAKSDDVKHALGETGFTFREVDDRLVGDYAPRWRARRHEPPRALPVTTRRAIVIGAGLAGCAVVERLAARGWDVTLIERHERIASEASGNPAGVFHPLMTRDDNVASRLTRGGFLHALARWRALERAGHAFSRSTHGMLHLAESADDFARMRDAFDAFGAPSDYATLLDADAARAHLNLPVAQGGLLFPHGGAVWPAGLCAAQYAAAGERVRLLASTCVARLERRDDTWHALDDTGATLADAPVVVLANAGDAARLAGLRHVALQPVRGQLTLLPPGTTAPLPCPAIGDGYAVPLDDGTLLIGATFEPDDTDPAMRAAGHAENLDRVRHLLPGLIGALPDPATLRGRVAFRWVVGDRLPLIGPLADETQATANARALGGAQARDLPRMPGLYGAFGFGSRGLVWAALGAELIASQLEGEPWPLERELADAVDPARFLIRALRARRVGSAG.

The tRNA (mnm(5)s(2)U34)-methyltransferase stretch occupies residues 1 to 223; sequence MPDRLVSATL…VDDRLVGDYA (223 aa). Positions 247–643 are FAD-dependent cmnm(5)s(2)U34 oxidoreductase; it reads IGAGLAGCAV…LRARRVGSAG (397 aa).

It in the N-terminal section; belongs to the methyltransferase superfamily. tRNA (mnm(5)s(2)U34)-methyltransferase family. In the C-terminal section; belongs to the DAO family. Requires FAD as cofactor.

The protein resides in the cytoplasm. It catalyses the reaction 5-aminomethyl-2-thiouridine(34) in tRNA + S-adenosyl-L-methionine = 5-methylaminomethyl-2-thiouridine(34) in tRNA + S-adenosyl-L-homocysteine + H(+). Catalyzes the last two steps in the biosynthesis of 5-methylaminomethyl-2-thiouridine (mnm(5)s(2)U) at the wobble position (U34) in tRNA. Catalyzes the FAD-dependent demodification of cmnm(5)s(2)U34 to nm(5)s(2)U34, followed by the transfer of a methyl group from S-adenosyl-L-methionine to nm(5)s(2)U34, to form mnm(5)s(2)U34. In Burkholderia orbicola (strain MC0-3), this protein is tRNA 5-methylaminomethyl-2-thiouridine biosynthesis bifunctional protein MnmC.